Here is a 98-residue protein sequence, read N- to C-terminus: NADH-ubiquinone oxidoreductase chain 4L (98 aa).

Transmembrane regions (helical) follow at residues 1 to 21 (MMSI…GVLI), 28 to 48 (STLL…ALLI), and 59 to 79 (APLI…ALLV).

It belongs to the complex I subunit 4L family. As to quaternary structure, core subunit of respiratory chain NADH dehydrogenase (Complex I) which is composed of 45 different subunits.

The protein localises to the mitochondrion inner membrane. It catalyses the reaction a ubiquinone + NADH + 5 H(+)(in) = a ubiquinol + NAD(+) + 4 H(+)(out). Functionally, core subunit of the mitochondrial membrane respiratory chain NADH dehydrogenase (Complex I) which catalyzes electron transfer from NADH through the respiratory chain, using ubiquinone as an electron acceptor. Part of the enzyme membrane arm which is embedded in the lipid bilayer and involved in proton translocation. This chain is NADH-ubiquinone oxidoreductase chain 4L (MT-ND4L), found in Lagorchestes hirsutus (Rufous hare-wallaby).